The sequence spans 314 residues: Ecto-ADP-ribosyltransferase 4 (314 aa).

Residues 1 to 46 form the signal peptide; that stretch reads MGPLINRCKKILLPTTVPPATMRIWLLGGLLPFLLLLSGLQRPTEG. 2 disulfide bridges follow: C69/C280 and C182/C231. The region spanning 91 to 276 is the TR mART core domain; sequence KNYFRMWQKA…LQLRSTGNLS (186 aa). N114 carries an N-linked (GlcNAc...) asparagine glycan. Y126 contacts NAD(+). A glycan (N-linked (GlcNAc...) asparagine) is linked at N178. Q206 contacts NAD(+). An N-linked (GlcNAc...) asparagine glycan is attached at N222. S240 contacts NAD(+). Residues N257 and N274 are each glycosylated (N-linked (GlcNAc...) asparagine). Residue A285 is the site of GPI-anchor amidated alanine attachment. Positions 286 to 314 are cleaved as a propeptide — removed in mature form; the sequence is SSKKCIPDPIAIASLSFLTSVIIFSKSRV.

Belongs to the Arg-specific ADP-ribosyltransferase family. As to expression, expressed in spleen and T-cells.

The protein localises to the cell membrane. The catalysed reaction is L-arginyl-[protein] + NAD(+) = N(omega)-(ADP-D-ribosyl)-L-arginyl-[protein] + nicotinamide + H(+). This chain is Ecto-ADP-ribosyltransferase 4 (ART4), found in Homo sapiens (Human).